The chain runs to 317 residues: Protein KlaC (317 aa).

In terms of biological role, belongs to the kla operon, which is associated with cryptic tellurite resistance, and IncW plasmid fertility inhibition. The protein is Protein KlaC (klaC) of Escherichia coli.